The primary structure comprises 243 residues: 7-cyano-7-deazaguanine synthase (243 aa).

Residue 9 to 19 (FSGGQDSTTCL) coordinates ATP. Zn(2+)-binding residues include Cys-205, Cys-220, Cys-223, and Cys-226.

It belongs to the QueC family. It depends on Zn(2+) as a cofactor.

The catalysed reaction is 7-carboxy-7-deazaguanine + NH4(+) + ATP = 7-cyano-7-deazaguanine + ADP + phosphate + H2O + H(+). It functions in the pathway purine metabolism; 7-cyano-7-deazaguanine biosynthesis. Functionally, catalyzes the ATP-dependent conversion of 7-carboxy-7-deazaguanine (CDG) to 7-cyano-7-deazaguanine (preQ(0)). The sequence is that of 7-cyano-7-deazaguanine synthase from Albidiferax ferrireducens (strain ATCC BAA-621 / DSM 15236 / T118) (Rhodoferax ferrireducens).